Consider the following 484-residue polypeptide: 1,4-beta-D-glucan cellobiohydrolase CEL6A (484 aa).

The N-terminal stretch at 1–17 is a signal peptide; sequence MAKRLLLTAALAATTLA. Positions 26–62 constitute a CBM1 domain; that stretch reads NCGSVWSQCGGQGWTGATCCASGSTCVAQNQWYSQCL. 2 disulfide bridges follow: C34-C51 and C45-C61. Positions 68–98 are disordered; that stretch reads TTTAQAPSSTRTTTSSSSRPTSSSISTSAVN. W171 and D173 together coordinate substrate. N175 carries an N-linked (GlcNAc...) asparagine glycan. Residues 208 to 230 form a substrate binding loop 1 region; it reads YDLPDRDCAAAASNGEWAIADGG. D260 (proton donor) is an active-site residue. The substrate site is built by H305, W308, N344, W405, K433, and E437. The substrate binding loop 2 stretch occupies residues 431 to 469; sequence WIKPGGECDGTSDTTAARYDHHCGFADALKPAPEAGQWF. The Proton acceptor role is filled by D439.

It belongs to the glycosyl hydrolase 6 (cellulase B) family. Monomer. Post-translationally, both N- and O-glycosylated.

The protein localises to the secreted. It carries out the reaction Hydrolysis of (1-&gt;4)-beta-D-glucosidic linkages in cellulose and cellotetraose, releasing cellobiose from the non-reducing ends of the chains.. Its function is as follows. Exoglucanase that plays an important function in biomass degradation by catalyzing the hydrolysis of the non-reducing end beta-1,4-glucosidic linkages in cellulose and cellotetraose to release cellobiose. Hydrolyzes crystalline and amorphous cellulose but is inactive on hydroxyethyl cellulose, mannan, galactomannan, xyloglucan, arabinoxylan, arabinan, xylan, and pectin. This is 1,4-beta-D-glucan cellobiohydrolase CEL6A from Podospora anserina (strain S / ATCC MYA-4624 / DSM 980 / FGSC 10383) (Pleurage anserina).